A 149-amino-acid chain; its full sequence is MSNPIAIDIHKILQLLPHRYPFLLVDRVLEITPRETITALKNVTMNEPFFQGHFPDFPVMPGVLIIEALAQTAALLTFSEERAEDAIYYFAGIDGARFKKPVLPGDQLIMTARLERGRAGIYKFAVQATVDGEIAAEANITCAVRSKGA.

His53 is a catalytic residue.

The protein belongs to the thioester dehydratase family. FabZ subfamily.

Its subcellular location is the cytoplasm. It carries out the reaction a (3R)-hydroxyacyl-[ACP] = a (2E)-enoyl-[ACP] + H2O. Functionally, involved in unsaturated fatty acids biosynthesis. Catalyzes the dehydration of short chain beta-hydroxyacyl-ACPs and long chain saturated and unsaturated beta-hydroxyacyl-ACPs. The polypeptide is 3-hydroxyacyl-[acyl-carrier-protein] dehydratase FabZ (Polynucleobacter asymbioticus (strain DSM 18221 / CIP 109841 / QLW-P1DMWA-1) (Polynucleobacter necessarius subsp. asymbioticus)).